Here is a 171-residue protein sequence, read N- to C-terminus: Adenine phosphoribosyltransferase (171 aa).

Belongs to the purine/pyrimidine phosphoribosyltransferase family. As to quaternary structure, homodimer.

Its subcellular location is the cytoplasm. It catalyses the reaction AMP + diphosphate = 5-phospho-alpha-D-ribose 1-diphosphate + adenine. It participates in purine metabolism; AMP biosynthesis via salvage pathway; AMP from adenine: step 1/1. Catalyzes a salvage reaction resulting in the formation of AMP, that is energically less costly than de novo synthesis. This Rhodospirillum centenum (strain ATCC 51521 / SW) protein is Adenine phosphoribosyltransferase.